Reading from the N-terminus, the 143-residue chain is Acyl carrier protein 3, chloroplastic (143 aa).

Residues 1–60 constitute a chloroplast transit peptide; sequence MATAAAGSSLICIKSASCSLNRAQVPSGLSSLRSVSLPISGKIFPSLRSSRGPLSFRVCC. The region spanning 64–139 is the Carrier domain; it reads QETVTRVCEI…DAADLIEKLV (76 aa). Position 99 is an O-(pantetheine 4'-phosphoryl)serine (Ser99).

This sequence belongs to the acyl carrier protein (ACP) family. Post-translationally, 4'-phosphopantetheine is transferred from CoA to a specific serine of apo-ACP by acpS. This modification is essential for activity because fatty acids are bound in thioester linkage to the sulfhydryl of the prosthetic group.

It localises to the plastid. Its subcellular location is the chloroplast. It functions in the pathway lipid metabolism; fatty acid biosynthesis. Functionally, carrier of the growing fatty acid chain in fatty acid biosynthesis. In Cuphea lanceolata (Cigar flower), this protein is Acyl carrier protein 3, chloroplastic (ACL1.3).